We begin with the raw amino-acid sequence, 312 residues long: Isethionate sulfite-lyase activating enzyme (312 aa).

The region spanning 22-309 is the Radical SAM core domain; the sequence is HDGPGIRTIV…VDETRGAVTE (288 aa). Residues C36, C40, C43, C62, C65, C68, C72, C92, C95, C100, and C104 each coordinate [4Fe-4S] cluster. 42–44 serves as a coordination point for S-adenosyl-L-methionine; the sequence is WCS. 4Fe-4S ferredoxin-type domains lie at 53-82 and 83-115; these read PQVA…VNED and GTLS…YGEN. S-adenosyl-L-methionine contacts are provided by residues G144, 193-195, and H267; that span reads DVK.

The protein belongs to the organic radical-activating enzymes family. As to quaternary structure, monomer. Requires [4Fe-4S] cluster as cofactor.

It carries out the reaction glycyl-[protein] + reduced [flavodoxin] + S-adenosyl-L-methionine = glycin-2-yl radical-[protein] + semiquinone [flavodoxin] + 5'-deoxyadenosine + L-methionine + H(+). Its pathway is organosulfur degradation; alkanesulfonate degradation. Functionally, involved in an anaerobic respiration pathway that converts the sulfonate taurine (2-aminoethanesulfonate) to ammonia, acetate and sulfide. Catalyzes activation of the isethionate sulfite-lyase IslA under anaerobic conditions by generation of an organic free radical on a glycine residue, via a homolytic cleavage of S-adenosyl-L-methionine (SAM). This chain is Isethionate sulfite-lyase activating enzyme, found in Bilophila wadsworthia (strain 3_1_6).